A 321-amino-acid polypeptide reads, in one-letter code: MFDFRPFYQQIATSTLSAWLETLPLQLKQWEKQTHGDYIKWSKIIDFLPHLTADHIDLKSAVKAETKTPLSSGERQRIIHHLKQLMPWRKGPYHLYGIHIDCEWRSDFKWERVLPHLAPLQNRLVLDVGCGSGYHMWRMVGEGAKMVVGIDPTELFLCQFEAVRKLLNNDRRANLIPLGIEEMQPLAAFDTVFSMGVLYHRKSPLDHLTQLKNQLVKDGELVLETLVVEGDINTILVPTDRYAKMKNVYFIPSVLALINWLEKCGFHNIRCVDVETTGLEEQRKTDWLENESLIDFLNPQDHSKTIEGYPAPKRAVILANK.

Carboxy-S-adenosyl-L-methionine-binding positions include Lys-90, Trp-104, Lys-109, Gly-129, 151-153, 180-181, Met-195, Tyr-199, and Arg-314; these read DPT and IE.

Belongs to the class I-like SAM-binding methyltransferase superfamily. CmoB family. As to quaternary structure, homotetramer.

It catalyses the reaction carboxy-S-adenosyl-L-methionine + 5-hydroxyuridine(34) in tRNA = 5-carboxymethoxyuridine(34) in tRNA + S-adenosyl-L-homocysteine + H(+). Functionally, catalyzes carboxymethyl transfer from carboxy-S-adenosyl-L-methionine (Cx-SAM) to 5-hydroxyuridine (ho5U) to form 5-carboxymethoxyuridine (cmo5U) at position 34 in tRNAs. The chain is tRNA U34 carboxymethyltransferase from Histophilus somni (strain 2336) (Haemophilus somnus).